Here is a 1634-residue protein sequence, read N- to C-terminus: Probable serine/threonine-protein kinase DDB_G0282895 (1634 aa).

An MORN 1 repeat occupies 40 to 63; sequence YKGNLNENKLKNGKGTFLFPNSIY. Residues 84–131 are disordered; it reads QKIQKKSSQSKSQQQPPSQTKKSSSPINLSPRLQGQNPTITTNGSNNN. Residues 89–109 show a composition bias toward low complexity; the sequence is KSSQSKSQQQPPSQTKKSSSP. Residues 110–119 are compositionally biased toward polar residues; the sequence is INLSPRLQGQ. The segment covering 120 to 131 has biased composition (low complexity); the sequence is NPTITTNGSNNN. One copy of the MORN 2 repeat lies at 169–191; it reads YNGKWINGKANGIGCFHFSKDDS. Low complexity-rich tracts occupy residues 273–292 and 318–339; these read SNNN…LSPT and SGSG…PISS. Disordered stretches follow at residues 273-367, 658-750, and 783-816; these read SNNN…QQQQ, TTAT…TFSV, and SSIL…NCGQ. Over residues 340 to 351 the composition is skewed to polar residues; the sequence is GLQHSKTQPNVS. Low complexity-rich tracts occupy residues 352 to 367, 658 to 688, and 703 to 715; these read QSQN…QQQQ, TTAT…TTTT, and PPSQ…SPSS. Positions 716-732 are enriched in polar residues; sequence DQTNLPSIAISSSNGIS. Positions 787–813 are enriched in low complexity; the sequence is NNNNNNNNNNNNNNNNNNNNNNNNNNN. Residues 1255-1275 traverse the membrane as a helical segment; that stretch reads IFIGFMELCVIDELCGFSFIY. One can recognise a Protein kinase domain in the interval 1377–1634; it reads LQILQFLGEG…IIQKLCNHKC (258 aa). Residues 1383-1391 and K1404 each bind ATP; that span reads LGEGALAEV. The Proton acceptor role is filled by D1500.

It belongs to the protein kinase superfamily. TKL Ser/Thr protein kinase family.

The protein localises to the membrane. It carries out the reaction L-seryl-[protein] + ATP = O-phospho-L-seryl-[protein] + ADP + H(+). The catalysed reaction is L-threonyl-[protein] + ATP = O-phospho-L-threonyl-[protein] + ADP + H(+). This chain is Probable serine/threonine-protein kinase DDB_G0282895, found in Dictyostelium discoideum (Social amoeba).